The sequence spans 762 residues: 5-methyltetrahydropteroyltriglutamate--homocysteine methyltransferase (762 aa).

5-methyltetrahydropteroyltri-L-glutamate is bound by residues Arg17 to Lys20 and Lys111. L-homocysteine is bound by residues Ile435 to Ser437 and Glu488. L-methionine is bound by residues Ile435 to Ser437 and Glu488. 5-methyltetrahydropteroyltri-L-glutamate is bound by residues Arg519–Cys520 and Trp565. Position 603 (Asp603) interacts with L-homocysteine. Residue Asp603 participates in L-methionine binding. Glu609 is a binding site for 5-methyltetrahydropteroyltri-L-glutamate. Positions 645, 647, and 669 each coordinate Zn(2+). His698 (proton donor) is an active-site residue. Residue Cys730 coordinates Zn(2+).

This sequence belongs to the vitamin-B12 independent methionine synthase family. Zn(2+) serves as cofactor.

It carries out the reaction 5-methyltetrahydropteroyltri-L-glutamate + L-homocysteine = tetrahydropteroyltri-L-glutamate + L-methionine. It participates in amino-acid biosynthesis; L-methionine biosynthesis via de novo pathway; L-methionine from L-homocysteine (MetE route): step 1/1. Its function is as follows. Catalyzes the transfer of a methyl group from 5-methyltetrahydrofolate to homocysteine resulting in methionine formation. The chain is 5-methyltetrahydropteroyltriglutamate--homocysteine methyltransferase from Bacillus thuringiensis subsp. konkukian (strain 97-27).